The sequence spans 493 residues: Beta-amyrin 11-oxidase (493 aa).

The helical transmembrane segment at 7–23 threads the bilayer; it reads CMSAATLLVCYIFGSKF. Residue C439 coordinates heme.

It belongs to the cytochrome P450 family. Heme serves as cofactor. As to expression, expressed in roots and stolons. Not detected in leaves and stems.

The protein resides in the membrane. The enzyme catalyses beta-amyrin + 2 reduced [NADPH--hemoprotein reductase] + 2 O2 = 11-oxo-beta-amyrin + 2 oxidized [NADPH--hemoprotein reductase] + 3 H2O + 2 H(+). It catalyses the reaction beta-amyrin + reduced [NADPH--hemoprotein reductase] + O2 = 11alpha-hydroxy-beta-amyrin + oxidized [NADPH--hemoprotein reductase] + H2O + H(+). It carries out the reaction 11alpha-hydroxy-beta-amyrin + reduced [NADPH--hemoprotein reductase] + O2 = 11-oxo-beta-amyrin + oxidized [NADPH--hemoprotein reductase] + 2 H2O + H(+). Involved in the biosynthesis of Glycyrrhetinic acid (GA), a natural product which exhibits anti-inflammatory activity. Catalyzes 2 successive oxidations of beta-amyrin, producing a precursor of the triterpene sweetener glycyrrhizin. Unable to use 11-deoxoglycyrrhetinic acid or ent-kaurenoic acid as substrates. This is Beta-amyrin 11-oxidase from Glycyrrhiza uralensis (Chinese licorice).